The chain runs to 280 residues: 3-methyl-2-oxobutanoate hydroxymethyltransferase (280 aa).

Mg(2+) is bound by residues aspartate 60 and aspartate 99. 3-methyl-2-oxobutanoate is bound by residues 60–61 (DS), aspartate 99, and lysine 129. Glutamate 131 serves as a coordination point for Mg(2+). Glutamate 198 (proton acceptor) is an active-site residue.

The protein belongs to the PanB family. As to quaternary structure, homodecamer; pentamer of dimers. Requires Mg(2+) as cofactor.

Its subcellular location is the cytoplasm. The catalysed reaction is 3-methyl-2-oxobutanoate + (6R)-5,10-methylene-5,6,7,8-tetrahydrofolate + H2O = 2-dehydropantoate + (6S)-5,6,7,8-tetrahydrofolate. The protein operates within cofactor biosynthesis; (R)-pantothenate biosynthesis; (R)-pantoate from 3-methyl-2-oxobutanoate: step 1/2. Its function is as follows. Catalyzes the reversible reaction in which hydroxymethyl group from 5,10-methylenetetrahydrofolate is transferred onto alpha-ketoisovalerate to form ketopantoate. This Thermobifida fusca (strain YX) protein is 3-methyl-2-oxobutanoate hydroxymethyltransferase.